A 285-amino-acid polypeptide reads, in one-letter code: MASEKPQESVYYLKPGDEERARLNNQHRVLVHIIENELLHAPIDPSTIVKIADVGTGTGIWLDALAAHLDPIPTAIGQPRQYDGLDMSPAHFPAFHPENFHYDVYNILQPVPEGLKGKYDLVHVRLLVSALSKGDVNTAVDNLAQLLRPGGWIQWDELDGESWAGRVPSAHVREMNELVRKHMETKGMELDVPAAFVKAAEAHPRLQNVSERIFNTIKSGPELKDDVNSVYLWSCTTSTKMILQASGTPGAEEEFKRLSEGAKADIERDGIFWDSDEHVLLAQKK.

Belongs to the methyltransferase superfamily. LaeA methyltransferase family.

Its pathway is secondary metabolite biosynthesis. Functionally, methyltransferase; part of the gene cluster that mediates the biosynthesis of gregatin A, a fungal polyketide featuring an alkylated furanone core. The PKS grgA synthesizes C11 and C4 polyketide chains in the presence and absence of the trans-enoyl reductase grgB, respectively. The polyketide transferase grgF is then responsible for the fusion of the two carbon chains to produce the furanone skeleton of gregatin A. Next, the cytochrome P450 monooxygenase grgG accepts performs the oxidative cyclization to furnish the gregatin scaffold and leads to the formation of desmethylgregatin A. Finally, the O-methyltransferase grgD methylates the carboxyl group of desmethylgregatin A to provide gregatin A. The chain is Methyltransferase grgD from Penicillium sp.